The primary structure comprises 196 residues: Thymidine kinase (196 aa).

ATP-binding positions include Gly-9–Ser-16 and Asp-85–Gln-88. Residue Glu-86 is the Proton acceptor of the active site. Zn(2+) contacts are provided by Cys-143, Cys-146, Cys-180, and His-183.

Belongs to the thymidine kinase family. As to quaternary structure, homotetramer.

Its subcellular location is the cytoplasm. The catalysed reaction is thymidine + ATP = dTMP + ADP + H(+). The sequence is that of Thymidine kinase from Streptococcus thermophilus (strain CNRZ 1066).